A 376-amino-acid polypeptide reads, in one-letter code: Glutamate 5-kinase (376 aa).

Lysine 15 serves as a coordination point for ATP. Residues serine 56, aspartate 143, and asparagine 155 each coordinate substrate. 175-176 (SD) lines the ATP pocket. The PUA domain maps to 281 to 358 (KGTLTIDAGA…PDVMSILGIT (78 aa)).

This sequence belongs to the glutamate 5-kinase family.

It localises to the cytoplasm. It catalyses the reaction L-glutamate + ATP = L-glutamyl 5-phosphate + ADP. The protein operates within amino-acid biosynthesis; L-proline biosynthesis; L-glutamate 5-semialdehyde from L-glutamate: step 1/2. Functionally, catalyzes the transfer of a phosphate group to glutamate to form L-glutamate 5-phosphate. This is Glutamate 5-kinase from Rhodopseudomonas palustris (strain BisB18).